We begin with the raw amino-acid sequence, 421 residues long: WD repeat and SOCS box-containing protein 1 (421 aa).

6 WD repeats span residues 32-71 (KCGR…QNFL), 124-165 (SRCV…LLLN), 168-208 (DHTE…NMMK), 212-251 (GHQN…MIRK), 254-293 (GHHH…ILME), and 309-346 (ANDR…DYPV). The SOCS box domain maps to 372–421 (DGSVYFWATPRQVPSLQHLCRMSIRRVMPTQEVQELPIPSKLLEFLSYRI).

Interacts with DIO2. Component of the probable ECS(WSB1) E3 ubiquitin ligase complex which contains CUL5, RNF7/RBX2, Elongin BC complex and WSB1. Component of a probable ECS-like E3 ubiquitin-protein ligase complex which contains CUL5, RBX1, Elongin BC complex and WSB1. Interacts with CUL5, RNF7, ELOB and ELOC. Binds to HIPK2 through WD40 repeats.

The protein operates within protein modification; protein ubiquitination. In terms of biological role, probable substrate-recognition component of a SCF-like ECS (Elongin-Cullin-SOCS-box protein) E3 ubiquitin ligase complex which mediates the ubiquitination and subsequent proteasomal degradation of target proteins. Recognizes type II iodothyronine deiodinase/DIO2. Confers constitutive instability to HIPK2 through proteasomal degradation. This chain is WD repeat and SOCS box-containing protein 1 (WSB1), found in Homo sapiens (Human).